A 116-amino-acid polypeptide reads, in one-letter code: MRHKHGYRKLGRTSSHRKALLKNLAIALIEHNKIETGIYKAKELRSYIEKLTTTARVGDFNAHRHVFAYLQNKEATHKLVTEIAPKYAQRNGGYTRIQRTTFRRGDASTLATIEFV.

Belongs to the bacterial ribosomal protein bL17 family. As to quaternary structure, part of the 50S ribosomal subunit. Contacts protein L32.

This chain is Large ribosomal subunit protein bL17, found in Helicobacter pylori (strain G27).